The following is a 383-amino-acid chain: Ribosomal RNA large subunit methyltransferase G (383 aa).

The protein belongs to the methyltransferase superfamily. RlmG family.

It localises to the cytoplasm. It carries out the reaction guanosine(1835) in 23S rRNA + S-adenosyl-L-methionine = N(2)-methylguanosine(1835) in 23S rRNA + S-adenosyl-L-homocysteine + H(+). Its function is as follows. Specifically methylates the guanine in position 1835 (m2G1835) of 23S rRNA. In Shewanella denitrificans (strain OS217 / ATCC BAA-1090 / DSM 15013), this protein is Ribosomal RNA large subunit methyltransferase G.